We begin with the raw amino-acid sequence, 464 residues long: Centrosomal protein of 55 kDa (464 aa).

Over residues 1–11 (MSSRSTKDLIK) the composition is skewed to basic and acidic residues. Residues 1-26 (MSSRSTKDLIKSKWGSKPSNSKSETT) form a disordered region. Coiled-coil stretches lie at residues 22 to 186 (KSET…QWLV), 238 to 337 (NDLL…FLYT), and 374 to 403 (QHQL…LHEF). Ser-96 bears the Phosphoserine mark. The interval 157-236 (PNCFNSSINN…GYLQEEKQKC (80 aa)) is interaction with TSG101. The interaction with PDCD6IP stretch occupies residues 160–214 (FNSSINNIHEMEIQLKDALEKNQQWLVYDQQREVYVKGLLAKIFELEKKTETAAH). The tract at residues 355–464 (QMQACTLDFE…LLVHVEYCSK (110 aa)) is required for localization to the interphase centrosome and to the midbody during cytokinesis. Phosphoserine; by CDK1 and MAPK1 occurs at positions 425 and 428. Residue Thr-430 is modified to Phosphothreonine. Phosphoserine; by PLK1 is present on Ser-436.

Homodimer. Interacts (phosphorylated on Ser-425 and Ser-428) with PLK1; the interaction is indirect via the MTMR3:MTMR4 heterooligomer, occurs during early mitosis, regulates the phosphorylation of CEP55 by PLK1 and its recruitment to the midbody where it can mediate cell abscission. Interacts with AKAP9/CG-NAP; the interaction occurs in interphase and is lost upon mitotic entry. Interacts with PCNT/Kendrin; the interaction occurs in interphase and is lost upon mitotic entry. Directly interacts with PDCD6IP; this interaction is required for PDCD6IP targeting to the midbody; CEP55 binds PDCD6IP in a 2:1 stoichiometry; PDCD6IP competes with TSG101 for the same binding site. Interacts with TSG101; TSG101 competes with PDCD6IP for the same binding site; interaction is required for cytokinesis but not for viral budding. Interacts with MVB12A, VPS37B, VPS37C and VPS28. There is a hierachy of phosphorylation, where both Ser-425 and Ser-428 are phosphorylated at the onset of mitosis, prior to Ser-436. Phosphorylation at Ser-425 and Ser-428 is required for dissociation from the centrosome at the G2/M boundary. Phosphorylation at the 3 sites, Ser-425, Ser-428 and Ser-436, is required for protein function at the final stages of cell division to complete cytokinesis successfully. As to expression, expressed in embryonic brain. Expressed in fetal brain ganglionic eminence, kidney tubules and multinucleate neurons in the temporal cortex. Expressed in adult brain, cerebellum, kidney tubules, intestine and muscles (at protein level). Widely expressed, mostly in proliferative tissues. Highly expressed in testis. Intermediate levels in adult and fetal thymus, as well as in various cancer cell lines. Low levels in different parts of the digestive tract, bone marrow, lymph nodes, placenta, fetal heart and fetal spleen. Hardly detected in brain.

It localises to the cytoplasm. Its subcellular location is the cytoskeleton. It is found in the microtubule organizing center. The protein resides in the centrosome. The protein localises to the centriole. It localises to the cleavage furrow. Its subcellular location is the midbody. It is found in the midbody ring. In terms of biological role, plays a role in mitotic exit and cytokinesis. Recruits PDCD6IP and TSG101 to midbody during cytokinesis. Required for successful completion of cytokinesis. Not required for microtubule nucleation. Plays a role in the development of the brain and kidney. The polypeptide is Centrosomal protein of 55 kDa (Homo sapiens (Human)).